A 581-amino-acid polypeptide reads, in one-letter code: Polypeptide N-acetylgalactosaminyltransferase 12 (581 aa).

Residues 1–19 (MWGRTARRRCPRELRRGRE) lie on the Cytoplasmic side of the membrane. Residues 20–37 (ALLVLLALLALAGLGSVL) traverse the membrane as a helical; Signal-anchor for type II membrane protein segment. Over 38 to 581 (RAQRGAGAGA…QKWFFKERML (544 aa)) the chain is Lumenal. The segment at 43–67 (AGAGAAEPGPPRTPRPGRREPVMPR) is disordered. Disulfide bonds link C125/C358, C349/C422, C458/C479, C506/C521, and C547/C566. The segment at 135 to 244 (LPRTSVIIAF…EGWLEPLLQR (110 aa)) is catalytic subdomain A. Residues D176 and R205 each coordinate substrate. Mn(2+)-binding residues include D228 and H230. Positions 304–366 (VIRSPTMAGG…PCSHVGHVFP (63 aa)) are catalytic subdomain B. Position 335 (W335) interacts with substrate. Mn(2+) is bound at residue H363. Residue Y371 coordinates substrate. Residues 445–577 (FFGMLQNKGL…NSDHQKWFFK (133 aa)) form the Ricin B-type lectin domain.

It belongs to the glycosyltransferase 2 family. GalNAc-T subfamily. Mn(2+) serves as cofactor. As to expression, widely expressed at different levels of expression. Highly expressed in digestive organs such as small intestine, stomach, pancreas and colon. Expressed at intermediate level in testis, thyroid gland and spleen. Weakly expressed in whole brain, cerebral cortex, cerebellum, fetal brain, bone marrow, thymus, leukocytes, heart, skeletal muscle, liver, lung, esophagus, kidney, adrenal gland, mammary gland, uterus, placenta, ovary and prostate.

It localises to the golgi apparatus membrane. It catalyses the reaction L-seryl-[protein] + UDP-N-acetyl-alpha-D-galactosamine = a 3-O-[N-acetyl-alpha-D-galactosaminyl]-L-seryl-[protein] + UDP + H(+). The catalysed reaction is L-threonyl-[protein] + UDP-N-acetyl-alpha-D-galactosamine = a 3-O-[N-acetyl-alpha-D-galactosaminyl]-L-threonyl-[protein] + UDP + H(+). It functions in the pathway protein modification; protein glycosylation. Functionally, catalyzes the initial reaction in O-linked oligosaccharide biosynthesis, the transfer of an N-acetyl-D-galactosamine residue to a serine or threonine residue on the protein receptor. Has activity toward non-glycosylated peptides such as Muc5AC, Muc1a and EA2, and no detectable activity with Muc2 and Muc7. Displays enzymatic activity toward the Gal-NAc-Muc5AC glycopeptide, but no detectable activity to mono-GalNAc-glycosylated Muc1a, Muc2, Muc7 and EA2. May play an important role in the initial step of mucin-type oligosaccharide biosynthesis in digestive organs. The protein is Polypeptide N-acetylgalactosaminyltransferase 12 (GALNT12) of Homo sapiens (Human).